A 382-amino-acid chain; its full sequence is MSLNIFWFLPTHGDGKYLGTSDGARAVDHGYLQQIAQAADRLGFGGVLIPTGRSCEDSWLVAASLIPVTERLKFLVALRPGIISPTVAARQAATLDRLSNGRALFNLVTGGDPDELAGDGLHLNHQERYEASVEFTRIWRKVLEGENVDYDGKHIQVKGAKLLYPPVQQPRPPLYFGGSSEAAQDLAAEQVELYLTWGEPPAAVAEKIAQVREKAAAQGREVRFGIRLHVIVRETNEEAWAAADRLISHLDDDTIARAQASLARFDSVGQQRMAALHGGNRDNLEVSPNLWAGVGLVRGGAGTALVGDGPTVAARVKEYADLGIDTFIFSGYPHLEESYRVAELLFLHIDVQRPEQPKTGGYVSPFGEMVANDILPKSVSQS.

The protein belongs to the SsuD family.

The enzyme catalyses an alkanesulfonate + FMNH2 + O2 = an aldehyde + FMN + sulfite + H2O + 2 H(+). Its function is as follows. Catalyzes the desulfonation of aliphatic sulfonates. This Pseudomonas sp protein is Alkanesulfonate monooxygenase.